Here is a 367-residue protein sequence, read N- to C-terminus: Adenosine deaminase (367 aa).

Histidine 46 and histidine 48 together coordinate Zn(2+). A purine D-ribonucleoside is bound by residues 48 to 50, aspartate 176, and glycine 205; that span reads HLD. Positions 174-188 are gating helix loop; regulates binding affinity for substrates and thus substrate selectivity; the sequence is TGDGGLSHERMKEAA. Histidine 230 provides a ligand contact to Zn(2+). A purine D-ribonucleoside is bound by residues glutamate 233, histidine 257, and aspartate 314. Aspartate 314 serves as a coordination point for Zn(2+).

Belongs to the metallo-dependent hydrolases superfamily. Adenosine and AMP deaminases family. The cofactor is Zn(2+).

It catalyses the reaction adenosine + H2O + H(+) = inosine + NH4(+). The catalysed reaction is S-methyl-5'-thioadenosine + H2O + H(+) = S-methyl-5'-thioinosine + NH4(+). The protein operates within purine metabolism; purine nucleoside salvage. Its activity is regulated as follows. Inhibited by coformycin and methylthiocoformycin (MT-coformycin). In terms of biological role, catalyzes the hydrolytic deamination of adenosine to produce inosine. Unlike mammalian adenosine deaminases, also catalyzes the deamination of 5'-methylthioadenosine (MTA), a by-product of polyamine biosynthesis, to produce 5'-methylthioinosine (MTI). Plays an essential role in the purine salvage pathway which allows the parasite to use host cell purines for the synthesis of nucleic acids. In Plasmodium falciparum (isolate 3D7), this protein is Adenosine deaminase.